The sequence spans 448 residues: Probable glycine dehydrogenase (decarboxylating) subunit 1 (448 aa).

The protein belongs to the GcvP family. N-terminal subunit subfamily. In terms of assembly, the glycine cleavage system is composed of four proteins: P, T, L and H. In this organism, the P 'protein' is a heterodimer of two subunits.

It catalyses the reaction N(6)-[(R)-lipoyl]-L-lysyl-[glycine-cleavage complex H protein] + glycine + H(+) = N(6)-[(R)-S(8)-aminomethyldihydrolipoyl]-L-lysyl-[glycine-cleavage complex H protein] + CO2. Functionally, the glycine cleavage system catalyzes the degradation of glycine. The P protein binds the alpha-amino group of glycine through its pyridoxal phosphate cofactor; CO(2) is released and the remaining methylamine moiety is then transferred to the lipoamide cofactor of the H protein. This is Probable glycine dehydrogenase (decarboxylating) subunit 1 from Listeria welshimeri serovar 6b (strain ATCC 35897 / DSM 20650 / CCUG 15529 / CIP 8149 / NCTC 11857 / SLCC 5334 / V8).